Consider the following 128-residue polypeptide: Infection structure-specific protein 56 (128 aa).

Composition is skewed to polar residues over residues 27 to 36 (HATYPQSQPH) and 87 to 101 (TSIS…DSQS). 2 disordered regions span residues 27-48 (HATY…AVPS) and 86-128 (GTSI…STSA). The segment covering 115 to 128 (KDAKKELKDPSTSA) has biased composition (basic and acidic residues).

Its function is as follows. General role in the development of germlings including formation of the infection structures. The polypeptide is Infection structure-specific protein 56 (INF56) (Uromyces appendiculatus (Rust fungus)).